The primary structure comprises 213 residues: uncharacterized protein (213 aa).

Coiled coils occupy residues 54-78 (KEQT…NLKL) and 108-151 (VKDV…STSK). Positions 122 to 142 (IEKEKEEEKAAKKAEKAEEKK) are enriched in basic and acidic residues. The tract at residues 122–213 (IEKEKEEEKA…FGGKPTGQIW (92 aa)) is disordered. A compositionally biased stretch (low complexity) spans 146–188 (KNSTSKSGSKSSKSSSGSSKSSSKSSKSSKSSSGSSKSSSKSS). Positions 189–199 (KNSKKSSKKSN) are enriched in basic residues.

It belongs to the mimivirus R546 family.

This is an uncharacterized protein from Acanthamoeba polyphaga (Amoeba).